A 338-amino-acid chain; its full sequence is MSLLRSLRLCLVARTGSCPLSALGPGPLLPSLQAGLPLLQSPQQWHTFHSGSWLSSASSKELLMKLRRKTGYSFINCKKALETCGGDLKQAESWLHKQAQKEGWSKAARLHGRKTKEGLIGLLQEGDTTVLVEVNCETDFVSRNLKFQQLVQQVALGTLLHCQNLKDQLSTYSKGFLNSSELSELPAGPEREGSLKDQLALAIGKLGENMILKRAAWVKVPAGFYVGSYVHGAMHSPSLHNLVLGKYGALVICETSELKANLADLGRRLGQHVVGMAPLSVGSLDDEPGGEAETKMLSQPYLLDPSITLGQYVQPHGVSVVDFVRFECGEGEDAADAE.

Residues 1–55 (MSLLRSLRLCLVARTGSCPLSALGPGPLLPSLQAGLPLLQSPQQWHTFHSGSWLS) constitute a mitochondrion transit peptide. Residues lysine 89, lysine 146, and lysine 205 each carry the N6-succinyllysine modification. Serine 283 is subject to Phosphoserine.

This sequence belongs to the EF-Ts family.

It localises to the mitochondrion. Functionally, associates with the EF-Tu.GDP complex and induces the exchange of GDP to GTP. It remains bound to the aminoacyl-tRNA.EF-Tu.GTP complex up to the GTP hydrolysis stage on the ribosome. The protein is Elongation factor Ts, mitochondrial of Bos taurus (Bovine).